The sequence spans 350 residues: Beta-hexosaminidase (350 aa).

Substrate-binding positions include Asp-62, Arg-70, Arg-133, and 163–164 (KH). His-176 serves as the catalytic Proton donor/acceptor. Asp-248 serves as the catalytic Nucleophile.

The protein belongs to the glycosyl hydrolase 3 family. NagZ subfamily.

Its subcellular location is the cytoplasm. The catalysed reaction is Hydrolysis of terminal non-reducing N-acetyl-D-hexosamine residues in N-acetyl-beta-D-hexosaminides.. It participates in cell wall biogenesis; peptidoglycan recycling. Its function is as follows. Plays a role in peptidoglycan recycling by cleaving the terminal beta-1,4-linked N-acetylglucosamine (GlcNAc) from peptide-linked peptidoglycan fragments, giving rise to free GlcNAc, anhydro-N-acetylmuramic acid and anhydro-N-acetylmuramic acid-linked peptides. This chain is Beta-hexosaminidase, found in Haemophilus influenzae (strain PittEE).